Reading from the N-terminus, the 130-residue chain is Cholecystokinin (130 aa).

Positions 1-20 are cleaved as a signal peptide; that stretch reads MYIGICICVLLAALSASSTG. A propeptide spanning residues 21 to 60 is cleaved from the precursor; that stretch reads QQTVGSMNEDPGAREIEQQNILQHPRHIRASSSAQLKPFQ. A Sulfotyrosine modification is found at tyrosine 112. Position 118 is a phenylalanine amide (phenylalanine 118). The propeptide occupies 122 to 130; the sequence is SAEEYEYSS. Tyrosine 126 and tyrosine 128 each carry sulfotyrosine.

This sequence belongs to the gastrin/cholecystokinin family. The precursor is cleaved by proteases to produce a number of active cholecystokinins. As to expression, expressed in brain, lung, testis and throughout the length of the small intestine. In the brain, expressed predominantly in the optic tectum and brain stem.

The protein localises to the secreted. Functionally, this peptide hormone induces gall bladder contraction and the release of pancreatic enzymes in the gut. Its function in the brain is not clear. The chain is Cholecystokinin (CCK) from Aquarana catesbeiana (American bullfrog).